Consider the following 467-residue polypeptide: Uronate isomerase (467 aa).

It belongs to the metallo-dependent hydrolases superfamily. Uronate isomerase family.

The enzyme catalyses D-glucuronate = D-fructuronate. It catalyses the reaction aldehydo-D-galacturonate = keto-D-tagaturonate. The protein operates within carbohydrate metabolism; pentose and glucuronate interconversion. The protein is Uronate isomerase of Streptococcus uberis (strain ATCC BAA-854 / 0140J).